Consider the following 183-residue polypeptide: MTTYKCIEKGIVVWLTGLPGSGKTTIATRLADLLQKEGYRVEVLDGDWARTTVSEGAGFTREERLRHLKRIAWIARLLARNGVIVICSFVSPYKQARNMVRRIVEEEGIPFLEIYVKASLEEVIRRDPKGLYKKALKGELENFTGITDPYEPPENPQLVLDTESNTIEHNVSYLYSLVKAVIE.

17-24 (GLPGSGKT) contributes to the ATP binding site. Residue Ser91 is the Phosphoserine intermediate of the active site.

Belongs to the APS kinase family.

It carries out the reaction adenosine 5'-phosphosulfate + ATP = 3'-phosphoadenylyl sulfate + ADP + H(+). It participates in sulfur metabolism; hydrogen sulfide biosynthesis; sulfite from sulfate: step 2/3. Functionally, catalyzes the synthesis of activated sulfate. The sequence is that of Probable adenylyl-sulfate kinase (cysC) from Aeropyrum pernix (strain ATCC 700893 / DSM 11879 / JCM 9820 / NBRC 100138 / K1).